The chain runs to 668 residues: Probable tRNA (uracil-O(2)-)-methyltransferase (668 aa).

A disordered region spans residues 441 to 460 (QHTDSLHISTKSSLDKDDPP). The segment at 620–649 (LKTRLCWFYVHHPNGCPRVAKSCPYAHGAE) adopts a C3H1-type zinc-finger fold.

Belongs to the TRM44 family.

The protein resides in the cytoplasm. It carries out the reaction uridine(44) in tRNA(Ser) + S-adenosyl-L-methionine = 2'-O-methyluridine(44) in tRNA(Ser) + S-adenosyl-L-homocysteine + H(+). Probable adenosyl-L-methionine (AdoMet)-dependent tRNA (uracil-O(2)-)-methyltransferase. This chain is Probable tRNA (uracil-O(2)-)-methyltransferase (trmt44), found in Xenopus laevis (African clawed frog).